Reading from the N-terminus, the 334-residue chain is Acryloyl-coenzyme A reductase (334 aa).

Position 38 (C38) interacts with Zn(2+). Y39 contributes to the NADP(+) binding site. Zn(2+) contacts are provided by H60, D90, C93, C96, C104, and C146. NADP(+)-binding positions include 173 to 176 and 195 to 197; these read SGGV and TTS.

This sequence belongs to the zinc-containing alcohol dehydrogenase family. In terms of assembly, monomer. Requires Zn(2+) as cofactor.

It carries out the reaction propanoyl-CoA + NADP(+) = acryloyl-CoA + NADPH + H(+). In terms of biological role, plays a role in autotrophic carbon fixation via the 3-hydroxypropionate/4-hydroxybutyrate cycle. Catalyzes the acryloyl-CoA dependent NADPH oxidation and formation of propionyl-CoA. Inactive towards 3-hydroxypropionyl-CoA, NADH and crotonyl-CoA. The polypeptide is Acryloyl-coenzyme A reductase (Sulfurisphaera tokodaii (strain DSM 16993 / JCM 10545 / NBRC 100140 / 7) (Sulfolobus tokodaii)).